Consider the following 322-residue polypeptide: Phosphatidylserine decarboxylase proenzyme (322 aa).

Catalysis depends on charge relay system; for autoendoproteolytic cleavage activity residues D90, H147, and S254. The active-site Schiff-base intermediate with substrate; via pyruvic acid; for decarboxylase activity is the S254. The residue at position 254 (S254) is a Pyruvic acid (Ser); by autocatalysis. The segment at E294–S322 is disordered. The segment covering N306 to S322 has biased composition (basic and acidic residues).

It belongs to the phosphatidylserine decarboxylase family. PSD-B subfamily. Prokaryotic type I sub-subfamily. In terms of assembly, heterodimer of a large membrane-associated beta subunit and a small pyruvoyl-containing alpha subunit. Pyruvate serves as cofactor. Post-translationally, is synthesized initially as an inactive proenzyme. Formation of the active enzyme involves a self-maturation process in which the active site pyruvoyl group is generated from an internal serine residue via an autocatalytic post-translational modification. Two non-identical subunits are generated from the proenzyme in this reaction, and the pyruvate is formed at the N-terminus of the alpha chain, which is derived from the carboxyl end of the proenzyme. The autoendoproteolytic cleavage occurs by a canonical serine protease mechanism, in which the side chain hydroxyl group of the serine supplies its oxygen atom to form the C-terminus of the beta chain, while the remainder of the serine residue undergoes an oxidative deamination to produce ammonia and the pyruvoyl prosthetic group on the alpha chain. During this reaction, the Ser that is part of the protease active site of the proenzyme becomes the pyruvoyl prosthetic group, which constitutes an essential element of the active site of the mature decarboxylase.

It is found in the cell membrane. It catalyses the reaction a 1,2-diacyl-sn-glycero-3-phospho-L-serine + H(+) = a 1,2-diacyl-sn-glycero-3-phosphoethanolamine + CO2. It functions in the pathway phospholipid metabolism; phosphatidylethanolamine biosynthesis; phosphatidylethanolamine from CDP-diacylglycerol: step 2/2. Functionally, catalyzes the formation of phosphatidylethanolamine (PtdEtn) from phosphatidylserine (PtdSer). The polypeptide is Phosphatidylserine decarboxylase proenzyme (Citrobacter koseri (strain ATCC BAA-895 / CDC 4225-83 / SGSC4696)).